We begin with the raw amino-acid sequence, 193 residues long: Potassium-transporting ATPase KdpC subunit (193 aa).

The helical transmembrane segment at Pro-7–Met-27 threads the bilayer.

The protein belongs to the KdpC family. The system is composed of three essential subunits: KdpA, KdpB and KdpC.

It localises to the cell inner membrane. Functionally, part of the high-affinity ATP-driven potassium transport (or Kdp) system, which catalyzes the hydrolysis of ATP coupled with the electrogenic transport of potassium into the cytoplasm. This subunit acts as a catalytic chaperone that increases the ATP-binding affinity of the ATP-hydrolyzing subunit KdpB by the formation of a transient KdpB/KdpC/ATP ternary complex. The polypeptide is Potassium-transporting ATPase KdpC subunit (Burkholderia mallei (strain NCTC 10247)).